The sequence spans 538 residues: Ribosome-associated complex subunit SSZ1 (538 aa).

The interval P400–L538 is peptide-binding domain. The segment at P464–P484 is disordered. Positions N470–P484 are enriched in acidic residues. 2 positions are modified to phosphoserine: S477 and S480.

This sequence belongs to the heat shock protein 70 family. In terms of assembly, RAC is a heterodimer of the Hsp70/DnaK-type chaperone SSZ1 and the Hsp40/DnaJ-type chaperone ZUO1. RAC associates with ribosomes via ZUO1.

The protein localises to the cytoplasm. Functionally, component of the ribosome-associated complex (RAC), a heterodimeric chaperone complex involved in regulation of accurate translation termination and in folding or maintaining nascent polypeptides in a folding-competent state. RAC stimulates the ATPase activity of the ribosome-associated pool of Hsp70-type chaperones SSB1/SSB2 that bind to the nascent polypeptide chain. SSZ1 is required for ZUO1 to function efficiently as a J-protein for SSB1/SSB2. Also involved in pleiotropic drug resistance by post-translational activation of transcription factor PDR1. This chain is Ribosome-associated complex subunit SSZ1 (SSZ1), found in Saccharomyces cerevisiae (strain ATCC 204508 / S288c) (Baker's yeast).